A 332-amino-acid chain; its full sequence is UPF0194 membrane protein YbhG (332 aa).

Residues 1-16 (MMKKPVVIGLAVVVLA) form the signal peptide. A coiled-coil region spans residues 108-211 (EEIAQAAAAV…LQDSTLVAPS (104 aa)).

Belongs to the UPF0194 family.

It localises to the periplasm. This is UPF0194 membrane protein YbhG from Escherichia coli O6:H1 (strain CFT073 / ATCC 700928 / UPEC).